The following is a 442-amino-acid chain: Matrix remodeling-associated protein 8 (442 aa).

The first 19 residues, 1 to 19 (MELLSRVLLWKLLLLQSSA), serve as a signal peptide directing secretion. At 20-340 (VLSSGPSGTA…PEDHTHFFQQ (321 aa)) the chain is on the extracellular side. Ig-like V-type domains lie at 25–156 (PSGT…LEVT) and 159–291 (PLLS…LQVT). 2 cysteine pairs are disulfide-bonded: C53-C136 and C185-C271. N-linked (GlcNAc...) asparagine glycosylation occurs at N118. The RGD 1 motif lies at 128 to 130 (RGD). A Phosphoserine modification is found at S227. Residues 251–253 (RGD) carry the RGD 2 motif. The tract at residues 296 to 319 (EPPARASPGNGSGHSSAPSPDPTL) is disordered. The N-linked (GlcNAc...) asparagine glycan is linked to N305. A helical transmembrane segment spans residues 341–361 (LGYVLATLLLFILLLITVVLA). At 362–442 (TRYRHSGGCK…DKEFRKEYCK (81 aa)) the chain is on the cytoplasmic side.

In terms of assembly, homodimer in cis. Does not appear to form trans-homodimers. Interacts with ITGB3; the interaction inhibits ITGAV:ITGB3 heterodimer formation. Widely expressed (at protein level). Highly expressed in brain where it localizes to the glia limitans, which is formed by the endfeet of astrocytes surrounding capillaries, and beneath the pia mater (at protein level). In lung, detected in epithelial cells of the bronchus (at protein level). Expressed in intercalated disks in the heart (at protein level). Detected in pancreatic alpha-cells in the islet of Langerhans (at protein level). In kidney, found in the brush border of the proximal convoluted tubule (at protein level). Expressed in the epithelium of the small intestine (at protein level). Weakly expressed in liver (at protein level). Detected in myeloid cells.

It is found in the cell membrane. The protein localises to the cell junction. The protein resides in the tight junction. It localises to the cytoplasm. Its subcellular location is the cell projection. It is found in the cilium membrane. The protein localises to the nucleus. In terms of biological role, transmembrane protein which can modulate activity of various signaling pathways, probably via binding to integrin ITGAV:ITGB3. Mediates heterophilic cell-cell interactions in vitro. Inhibits osteoclastogenesis downstream of TNFSF11/RANKL and CSF1, where it may function by attenuating signaling via integrin ITGB3 and MAP kinase p38. Plays a role in cartilage formation where it promotes proliferation and maturation of growth plate chondrocytes. Stimulates formation of primary cilia in chondrocytes. Enhances expression of genes involved in the hedgehog signaling pathway in chondrocytes, including the hedgehog signaling molecule IHH; may also promote signaling via the PTHLH/PTHrP pathway. Plays a role in angiogenesis where it suppresses migration of endothelial cells and also promotes their apoptosis. Inhibits VEGF-induced activation of AKT and p38 MAP kinase in endothelial cells. Also inhibits VTN (vitronectin)-mediated integrin ITGAV:ITGB3 signaling and activation of PTK2/FAK. May play a role in the maturation and maintenance of the blood-brain barrier. The sequence is that of Matrix remodeling-associated protein 8 from Mus musculus (Mouse).